A 133-amino-acid chain; its full sequence is Small ribosomal subunit protein eS24z (133 aa).

The segment at 104–133 is disordered; that stretch reads KSRKQIKERKNRAKKIRGVKKTKAGDAKKK. Positions 109 to 125 are enriched in basic residues; it reads IKERKNRAKKIRGVKKT.

It belongs to the eukaryotic ribosomal protein eS24 family.

In Arabidopsis thaliana (Mouse-ear cress), this protein is Small ribosomal subunit protein eS24z (RPS24A).